The following is an 84-amino-acid chain: Toxin Acra3 (84 aa).

An N-terminal signal peptide occupies residues 1–17; it reads MKIIFLVLMMILSEVYS. The LCN-type CS-alpha/beta domain maps to 19–82; sequence RDGYPVHDGT…VYGDDGIFCK (64 aa). 4 cysteine pairs are disulfide-bonded: C30-C81, C34-C57, C43-C62, and C47-C64. The residue at position 83 (S83) is a Serine amide.

This sequence belongs to the long (4 C-C) scorpion toxin superfamily. Sodium channel inhibitor family. Beta subfamily. In terms of tissue distribution, expressed by the venom gland.

The protein localises to the secreted. Toxin with unknown target. In vivo, induces severe neurotoxic events in mice such as excitability and convulsions, leading to the death of the animals within a few minutes after injection. Exerts very strong cytotoxic effect on a mouse brain tumor cell line (BC3H1) (IC(50)=5 mg/ml). It exerts its effects by inducing a stronger necrosis than apoptosis in BC3H1 cells. In Androctonus crassicauda (Arabian fat-tailed scorpion), this protein is Toxin Acra3.